The chain runs to 1849 residues: Protein TANC1 (1849 aa).

The residue at position 1 (Met-1) is an N-acetylmethionine. 2 disordered regions span residues 1-47 (MLKA…TTED) and 59-109 (MSLP…FREG). The span at 8–21 (KSREGVKGSKKEAG) shows a compositional bias: basic and acidic residues. Residues 27–46 (ETPTLSSSGDSPVNSLSTTE) are compositionally biased toward polar residues. Residues Ser-60, Ser-63, Ser-64, Ser-204, Ser-267, and Ser-455 each carry the phosphoserine modification. Disordered stretches follow at residues 264-309 (DNCS…PRPN) and 430-481 (VASS…QRPR). Residues 451-468 (TPLLSPSSSTSALSAART) are compositionally biased toward low complexity. ANK repeat units lie at residues 886–918 (EGLS…NVNY), 924–953 (NNAP…CLDG), 957–986 (NGMN…RVDH), 990–1019 (KGQC…SAGP), 1030–1059 (ALQQ…EHEI), 1068–1097 (WGET…AVSR), 1101–1130 (RGVP…DVNP), 1134–1163 (QGRT…ALSS), 1167–1196 (EGLS…EIDQ), 1200–1229 (NGRT…VIEH), and 1233–1262 (SGMR…KLGN). TPR repeat units lie at residues 1279-1312 (LQKL…FPRE), 1326-1359 (VSLY…KPKS), and 1361-1393 (EAFY…CPTN). Over residues 1410-1421 (LQRNQQQKQQAP) the composition is skewed to low complexity. 4 disordered regions span residues 1410-1503 (LQRN…ISKS), 1527-1605 (NQHL…GESG), 1635-1711 (QGGP…PRNT), and 1812-1849 (PHLY…ESNV). 2 positions are modified to phosphoserine: Ser-1429 and Ser-1456. Positions 1447 to 1456 (EEAEEEDTSS) are enriched in acidic residues. Polar residues-rich tracts occupy residues 1527–1546 (NQHL…KVQV) and 1593–1603 (PSQSLQLQRGE). Residues 1649–1679 (SLSSSGSSGSPSSSVKMSSSTSSLTSSSSVS) show a composition bias toward low complexity. Phosphoserine is present on residues Ser-1658, Ser-1666, and Ser-1667.

This sequence belongs to the TANC family. In terms of assembly, interacts probably directly with DLG1, DLG4, HOMER1. Interacts with DLGAP1, INA, CAMK2A, GRIN2B and GRIA1. Interacts with TNIK and MINK1. In terms of processing, phosphorylated; by MINK1 and TNIK upon stimulation by RAP2A. In terms of tissue distribution, expressed in heart, lung, liver and kidney. Expressed in brain (at protein level).

It is found in the postsynaptic density. May be a scaffold component in the postsynaptic density. This Rattus norvegicus (Rat) protein is Protein TANC1 (Tanc1).